The primary structure comprises 472 residues: P2X purinoceptor 2 (472 aa).

The Cytoplasmic segment spans residues 1-34 (MVRRLARGCWSAFWDYETPKVIVVRNRRLGFVHR). Intrachain disulfides connect C9-C430, C113-C164, C124-C147, C130-C158, C214-C224, and C258-C267. A helical membrane pass occupies residues 35-52 (MVQLLILLYFVWYVFIVQ). Topologically, residues 53–326 (KSYQDSETGP…IVHGQAGKFS (274 aa)) are extracellular. Residues K69 and K71 each contribute to the ATP site. Residue N182 is glycosylated (N-linked (GlcNAc...) asparagine). Position 184 (T184) interacts with ATP. Residue N239 is glycosylated (N-linked (GlcNAc...) asparagine). ATP is bound by residues S284, N288, and R290. N-linked (GlcNAc...) asparagine glycosylation is present at N298. K308 is a binding site for ATP. The interval 309–322 (AYGIRIDVIVHGQA) is pore-forming motif. A helical membrane pass occupies residues 327 to 347 (LIPTIINLATALTSIGVGSFL). Residues 348–472 (CDWILLTFMN…STDPKGLAQL (125 aa)) lie on the Cytoplasmic side of the membrane. A disordered region spans residues 393–472 (PPPSHYSQDQ…STDPKGLAQL (80 aa)). The span at 456-465 (PSQQDSTSTD) shows a compositional bias: polar residues.

The protein belongs to the P2X receptor family. As to quaternary structure, homotrimer and heterotrimer; functional P2XRs are organized as homomeric and heteromeric trimers. Homotrimer. Forms heterotrimer with P2RX1. Forms heterotrimer with P2RX6. Forms heterotrimer with P2RX3. High levels in pituitary and vas deferens. Lower extent in spinal cord, bladder, brain, adrenal, testis, sensory epithelia from the inner ear.

It localises to the cell membrane. It catalyses the reaction Ca(2+)(in) = Ca(2+)(out). It carries out the reaction K(+)(in) = K(+)(out). The enzyme catalyses Na(+)(in) = Na(+)(out). Fast activation by external ATP. Exhibits slow desensitization during prolonged ATP activation. Not sensitive to the ATP agonist:alpha/beta-methylene-ATP. In terms of biological role, ATP-gated nonselective transmembrane cation channel permeable to potassium, sodium and calcium. Activation by extracellular ATP induces a variety of cellular responses, such as excitatory postsynaptic responses in sensory neurons, neuromuscular junctions (NMJ) formation, hearing, perception of taste and peristalsis. In the inner ear, regulates sound transduction and auditory neurotransmission, outer hair cell electromotility, inner ear gap junctions, and K(+) recycling. Mediates synaptic transmission between neurons and from neurons to smooth muscle. The protein is P2X purinoceptor 2 (P2rx2) of Rattus norvegicus (Rat).